A 319-amino-acid polypeptide reads, in one-letter code: Annexin D4 (319 aa).

2 Annexin repeats span residues 1–75 (MALP…EFSR) and 86–157 (HPWE…GLVS). G19, G21, and E72 together coordinate Ca(2+). T115 carries the phosphothreonine modification. Y159 and Y211 each carry phosphotyrosine. Annexin repeat units follow at residues 169-240 (DSAK…ICLL) and 241-316 (KPAL…TLLS). S277 bears the Phosphoserine mark. Y287 bears the Phosphotyrosine mark.

It belongs to the annexin (TC 1.A.31.1) family. Expressed mainly in roots and flowers. Lower in stems and leaves.

Its function is as follows. May be involved in osmotic stress and abscisic acid signaling in a calcium-dependent manner. This is Annexin D4 (ANN4) from Arabidopsis thaliana (Mouse-ear cress).